Consider the following 324-residue polypeptide: UDP-N-acetylenolpyruvoylglucosamine reductase (324 aa).

The region spanning 39 to 220 is the FAD-binding PCMH-type domain; that stretch reads RTGGLAELFY…RAAMHEVALH (182 aa). The active site involves R185. S234 (proton donor) is an active-site residue. E304 is an active-site residue.

It belongs to the MurB family. The cofactor is FAD.

Its subcellular location is the cytoplasm. It catalyses the reaction UDP-N-acetyl-alpha-D-muramate + NADP(+) = UDP-N-acetyl-3-O-(1-carboxyvinyl)-alpha-D-glucosamine + NADPH + H(+). It functions in the pathway cell wall biogenesis; peptidoglycan biosynthesis. Functionally, cell wall formation. In Bartonella bacilliformis (strain ATCC 35685 / KC583 / Herrer 020/F12,63), this protein is UDP-N-acetylenolpyruvoylglucosamine reductase.